We begin with the raw amino-acid sequence, 434 residues long: GTPase Obg (434 aa).

One can recognise an Obg domain in the interval Pro-2 to Leu-160. In terms of domain architecture, OBG-type G spans Ala-161–Glu-334. GTP is bound by residues Gly-167–Ser-174, Phe-192–Thr-196, Asp-214–Gly-217, Ser-284–Asp-287, and Ser-315–Val-317. Ser-174 and Thr-194 together coordinate Mg(2+). Residues Tyr-356–Gln-434 form the OCT domain.

Belongs to the TRAFAC class OBG-HflX-like GTPase superfamily. OBG GTPase family. As to quaternary structure, monomer. Mg(2+) serves as cofactor.

The protein localises to the cytoplasm. An essential GTPase which binds GTP, GDP and possibly (p)ppGpp with moderate affinity, with high nucleotide exchange rates and a fairly low GTP hydrolysis rate. Plays a role in control of the cell cycle, stress response, ribosome biogenesis and in those bacteria that undergo differentiation, in morphogenesis control. The protein is GTPase Obg of Lactobacillus helveticus (strain DPC 4571).